A 101-amino-acid chain; its full sequence is Thrombin-like enzyme okinaxobin-1 (101 aa).

Positions 1–16 (LIRVLANLLILQLSYA) are cleaved as a signal peptide. Residues 17 to 22 (QKSSEL) constitute a propeptide that is removed on maturation. The region spanning 23-101 (VIGGDECNIN…PKKKYFFRCR (79 aa)) is the Peptidase S1 domain. A disulfide bond links cysteine 50 and cysteine 66. The active-site Charge relay system is histidine 65.

This sequence belongs to the peptidase S1 family. Snake venom subfamily. As to quaternary structure, monomer. In terms of processing, glycosylated. In terms of tissue distribution, expressed by the venom gland.

The protein localises to the secreted. Strongly inactivated by diisopropylfluorophosphate (DFP) and phenylmethanesulfonyl fluoride (PMSF), and to a lesser extent by tosyl-L-lysine chloromethyl ketone (TLCK). Functionally, thrombin-like snake venom serine protease that releases specifically fibrinopeptide B from fibrinogen (FGB) to form fibrin clots. Shows a preferential cleavage at Arg-|-Gly bonds in fibrinogen beta chains. Cleaves fibrinogen beta chains preferentially to alpha chains. In Ovophis okinavensis (Ryukyu Island pit viper), this protein is Thrombin-like enzyme okinaxobin-1.